Here is a 512-residue protein sequence, read N- to C-terminus: Glutathione-binding protein GsiB (512 aa).

Residues 1-26 (MARAVHRSGLVALGIATALMASCAFA) form the signal peptide.

This sequence belongs to the bacterial solute-binding protein 5 family. In terms of assembly, the complex is composed of two ATP-binding proteins (GsiA), two transmembrane proteins (GsiC and GsiD) and a solute-binding protein (GsiB).

It is found in the periplasm. Functionally, part of the ABC transporter complex GsiABCD involved in glutathione import. Binds glutathione. The protein is Glutathione-binding protein GsiB of Shigella flexneri.